Reading from the N-terminus, the 424-residue chain is Enolase (424 aa).

Q165 provides a ligand contact to (2R)-2-phosphoglycerate. E207 (proton donor) is an active-site residue. Positions 244, 283, and 310 each coordinate Mg(2+). Residues K335, R364, S365, and K386 each coordinate (2R)-2-phosphoglycerate. The active-site Proton acceptor is K335.

The protein belongs to the enolase family. Mg(2+) serves as cofactor.

The protein resides in the cytoplasm. It is found in the secreted. It localises to the cell surface. It carries out the reaction (2R)-2-phosphoglycerate = phosphoenolpyruvate + H2O. It functions in the pathway carbohydrate degradation; glycolysis; pyruvate from D-glyceraldehyde 3-phosphate: step 4/5. Functionally, catalyzes the reversible conversion of 2-phosphoglycerate (2-PG) into phosphoenolpyruvate (PEP). It is essential for the degradation of carbohydrates via glycolysis. The sequence is that of Enolase from Chlamydia trachomatis serovar L2 (strain ATCC VR-902B / DSM 19102 / 434/Bu).